Here is a 271-residue protein sequence, read N- to C-terminus: Putative protein FAM220BP (271 aa).

This is Putative protein FAM220BP (FAM220BP) from Homo sapiens (Human).